The chain runs to 652 residues: UvrABC system protein C (652 aa).

In terms of domain architecture, GIY-YIG spans 37-116; sequence KSSGCYLFKD…IKTNKPYFNI (80 aa). Positions 226 to 261 constitute a UVR domain; that stretch reads DDLEIFLQKKMLQFSNDLDYENAAKIRDQISGLKLL.

The protein belongs to the UvrC family. Interacts with UvrB in an incision complex.

It localises to the cytoplasm. In terms of biological role, the UvrABC repair system catalyzes the recognition and processing of DNA lesions. UvrC both incises the 5' and 3' sides of the lesion. The N-terminal half is responsible for the 3' incision and the C-terminal half is responsible for the 5' incision. This is UvrABC system protein C from Prochlorococcus marinus (strain MIT 9312).